The chain runs to 317 residues: MKI67 FHA domain-interacting nucleolar phosphoprotein (317 aa).

A2 is subject to N-acetylalanine. Residue K40 forms a Glycyl lysine isopeptide (Lys-Gly) (interchain with G-Cter in SUMO2) linkage. An RRM domain is found at 47-125 (GVVYLGHLPS…RLLSCKFMPR (79 aa)). Omega-N-methylarginine is present on R116. Residues K181 and K194 each participate in a glycyl lysine isopeptide (Lys-Gly) (interchain with G-Cter in SUMO2) cross-link. R203 carries the citrulline modification. Residues 203-317 (RDSEGNQVLP…KRPRKRKSKQ (115 aa)) form a disordered region. The span at 213–233 (DQKEGLSGEPRRKEKMMKEDI) shows a compositional bias: basic and acidic residues. S219 is modified (phosphoserine). A compositionally biased stretch (basic residues) spans 238–248 (PKKRKRSRRKK). Residue S253 is modified to Phosphoserine. 2 positions are modified to phosphothreonine: T257 and T261. A compositionally biased stretch (basic and acidic residues) spans 265 to 284 (LERRKSQVMEVGGDKDDEII). Omega-N-methylated arginine occurs at positions 267 and 268. A Phosphoserine modification is found at S270. A Glycyl lysine isopeptide (Lys-Gly) (interchain with G-Cter in SUMO1); alternate cross-link involves residue K293. K293 participates in a covalent cross-link: Glycyl lysine isopeptide (Lys-Gly) (interchain with G-Cter in SUMO2); alternate. T301 is subject to Phosphothreonine. The span at 308 to 317 (KRPRKRKSKQ) shows a compositional bias: basic residues.

As to quaternary structure, binds to the FHA domain of MKI67; this interaction is enhanced in mitosis. Phosphorylated. Post-translationally, citrullinated by PADI4. Expressed in brain, heart, hind limb muscles, intestine, liver, skin and spleen.

It localises to the nucleus. The protein localises to the nucleolus. The protein resides in the chromosome. The sequence is that of MKI67 FHA domain-interacting nucleolar phosphoprotein (Nifk) from Mus musculus (Mouse).